The chain runs to 77 residues: Apidermin 2 (77 aa).

The signal sequence occupies residues 1–16 (MKSLLILFAIVAVVAA).

In terms of tissue distribution, expressed in the epidermis, hypopharyngeal glands, fat body, trachea, esophagus and stomach.

Its subcellular location is the secreted. Its function is as follows. Antimicrobial peptide that binds cell wall carbohydrates of microbial symbionts and induces structural damage. Binds the cell wall carbohydrates mannan, N-acetyl-D-glucosamine and lipopolysaccharide. Can target fungi, Gram-negative and Gram-positive bacteria. The protein is Apidermin 2 of Apis mellifera (Honeybee).